Consider the following 798-residue polypeptide: Serine/threonine-protein kinase haspin (798 aa).

The tract at residues 1–110 (MAASLPGPGS…WKLRARPSLT (110 aa)) is disordered. Residue Ser58 is modified to Phosphoserine. The segment covering 59–70 (QSDDPDDPDDPD) has biased composition (acidic residues). Ser93 is subject to Phosphoserine; by AURKB. At Thr97 the chain carries Phosphothreonine. Phosphoserine; by AURKB is present on Ser143. The residue at position 147 (Ser147) is a Phosphoserine. A disordered region spans residues 275–350 (LVVGNGPEGP…KHQEATETSL (76 aa)). A compositionally biased stretch (basic and acidic residues) spans 300–315 (CQERGLQEAVRREHQE). Residues 484–798 (LQRCEKIGEG…DLLCQHSLFK (315 aa)) form the Protein kinase domain. ATP-binding positions include 490-498 (IGEGVFGEV), Lys511, 606-611 (EFGGID), 649-654 (DLHWGN), and 687-689 (DYT). The Proton acceptor role is filled by Asp649.

The protein belongs to the protein kinase superfamily. Ser/Thr protein kinase family. Haspin subfamily. The cofactor is Mg(2+). Post-translationally, autophosphorylated on both serine and threonine residues. Strongly phosphorylated during mitosis but this does not appear to significantly affect its intrinsic kinase activity. Phosphorylation by AURKB is required for full activity toward histone H3 at 'Ser-3' in mitosis. As to expression, strongly expressed in testis. Also present in thymus and bone marrow and low levels observed in prostate, intestine, lung, spleen and lymph node. Expressed in fetal skin, liver, kidney and small intestine and also in proliferating but not non-proliferating cell lines.

Its subcellular location is the nucleus. It localises to the chromosome. It is found in the cytoplasm. The protein resides in the cytoskeleton. The protein localises to the spindle. The catalysed reaction is L-seryl-[protein] + ATP = O-phospho-L-seryl-[protein] + ADP + H(+). The enzyme catalyses L-threonyl-[protein] + ATP = O-phospho-L-threonyl-[protein] + ADP + H(+). Its activity is regulated as follows. Constitutive activity that does not require phosphorylation. Specifically inhibited by 3-(1H-indazol-5-yl)-N-propylimidazo[1,2-b]pyridazin-6-amine (CHR-6494). Its function is as follows. Serine/threonine-protein kinase that phosphorylates histone H3 at 'Thr-3' (H3T3ph) during mitosis. May act through H3T3ph to both position and modulate activation of AURKB and other components of the chromosomal passenger complex (CPC) at centromeres to ensure proper chromatid cohesion, metaphase alignment and normal progression through the cell cycle. This Homo sapiens (Human) protein is Serine/threonine-protein kinase haspin.